Consider the following 339-residue polypeptide: MSRSGTWDMDGLRADGGAAGAAPASSSSSVAAPGQCRGFLSAPVFAGTHSGRAAAAAAAAAAAAAAASSFAYPGTSERTGSSSSSSSSAVIATRPEAPVAKECPAPAAAATAAAPPGAPALGYGYHFGNGYYSCRMSHGVGLQQNALKSSPHASLGGFPVEKYMDVSGLASSSVPTNEVPARAKEVSFYQGYTSPYQHVPGYIDMVSTFGSGEPRHEAYISMEGYQSWTLANGWNSQVYCAKDQPQGSHFWKSSFPGDVALNQPDMCVYRRGRKKRVPYTKLQLKELENEYAINKFINKDKRRRISAATNLSERQVTIWFQNRRVKDKKIVSKLKDTVS.

The segment at 1–33 is disordered; sequence MSRSGTWDMDGLRADGGAAGAAPASSSSSVAAP. A compositionally biased stretch (low complexity) spans 20 to 33; the sequence is GAAPASSSSSVAAP. A DNA-binding region (homeobox) is located at residues 272–331; that stretch reads GRKKRVPYTKLQLKELENEYAINKFINKDKRRRISAATNLSERQVTIWFQNRRVKDKKIV.

Belongs to the Abd-B homeobox family.

It localises to the nucleus. Sequence-specific transcription factor that binds gene promoters and activates their transcription. Part of a developmental regulatory system that provides cells with specific positional identities on the anterior-posterior axis. The sequence is that of Homeobox protein Hox-D13 (Hoxd13) from Mus musculus (Mouse).